Reading from the N-terminus, the 319-residue chain is Formimidoylglutamase (319 aa).

The Mn(2+) site is built by Asn-127, Asp-150, His-152, Asp-154, Asp-242, and Asp-244.

This sequence belongs to the arginase family. The cofactor is Mn(2+).

It catalyses the reaction N-formimidoyl-L-glutamate + H2O = formamide + L-glutamate. The protein operates within amino-acid degradation; L-histidine degradation into L-glutamate; L-glutamate from N-formimidoyl-L-glutamate (hydrolase route): step 1/1. In terms of biological role, catalyzes the conversion of N-formimidoyl-L-glutamate to L-glutamate and formamide. In Bacillus subtilis (strain 168), this protein is Formimidoylglutamase.